A 452-amino-acid chain; its full sequence is Mitochondrial import inner membrane translocase subunit TIM50 (452 aa).

The N-terminal 23 residues, 1–23 (MSLSKLTQTCFSRHQAKTFIRLY), are a transit peptide targeting the mitochondrion. The Mitochondrial matrix portion of the chain corresponds to 24-167 (SSDFKSLLGP…RRKRMERNTR (144 aa)). Disordered stretches follow at residues 96–115 (IEAE…TSSA) and 130–153 (ESAA…GNAE). Residues 131-144 (SAASKSSSSSGGSS) show a composition bias toward low complexity. A helical membrane pass occupies residues 168-188 (IGAYVLFGGSIIGFISFCFYY). Residues 189 to 452 (GRAQRDEFGN…LFGSRRHVNA (264 aa)) are Mitochondrial intermembrane-facing. An FCP1 homology domain is found at 243-387 (YLQPKYTIVI…VDLAELLKTI (145 aa)).

Belongs to the TIM50 family.

The protein localises to the mitochondrion inner membrane. Functionally, essential component of the TIM23 complex, a complex that mediates the translocation of transit peptide-containing proteins across the mitochondrial inner membrane. This chain is Mitochondrial import inner membrane translocase subunit TIM50 (scpl-4), found in Caenorhabditis elegans.